A 204-amino-acid polypeptide reads, in one-letter code: MEIFSYIIIAVVAYLLGNISTSYIVAKRIAGVDIRTQGSGNAGSTNVLRTLGKRAGAMTFLGDVLKGVMAVLISEFAARLVGIDTLLAGYLAVICVVAGHNWPAVLGFRGGKGVATSLGAMLAVNPVITLMCLAVFILVVAITKYVSLGSVVGIGCSPIFMIMVKNKAGLIVALFLTASVIYNHRANIKRLLNGTERKIGQKKE.

The next 5 helical transmembrane spans lie at 6-26 (YIII…YIVA), 80-100 (LVGI…VAGH), 122-142 (LAVN…VVAI), 144-164 (KYVS…MIMV), and 168-188 (AGLI…RANI).

This sequence belongs to the PlsY family. Probably interacts with PlsX.

The protein localises to the cell membrane. The catalysed reaction is an acyl phosphate + sn-glycerol 3-phosphate = a 1-acyl-sn-glycero-3-phosphate + phosphate. It functions in the pathway lipid metabolism; phospholipid metabolism. Functionally, catalyzes the transfer of an acyl group from acyl-phosphate (acyl-PO(4)) to glycerol-3-phosphate (G3P) to form lysophosphatidic acid (LPA). This enzyme utilizes acyl-phosphate as fatty acyl donor, but not acyl-CoA or acyl-ACP. The chain is Glycerol-3-phosphate acyltransferase from Clostridioides difficile (strain 630) (Peptoclostridium difficile).